The following is a 243-amino-acid chain: Proteasome subunit beta (243 aa).

The segment covering 1–16 (MRAPQHNSDFSRTVNQ) has biased composition (polar residues). Positions 1 to 29 (MRAPQHNSDFSRTVNQLADDPNPYEPEVG) are disordered. Positions 1–48 (MRAPQHNSDFSRTVNQLADDPNPYEPEVGSMPKNEFSRADLDNVNKTG) are cleaved as a propeptide — removed in mature form; by autocatalysis. Catalysis depends on threonine 49, which acts as the Nucleophile.

Belongs to the peptidase T1B family. In terms of assembly, the 20S proteasome core is composed of 14 alpha and 14 beta subunits that assemble into four stacked heptameric rings, resulting in a barrel-shaped structure. The two inner rings, each composed of seven catalytic beta subunits, are sandwiched by two outer rings, each composed of seven alpha subunits. The catalytic chamber with the active sites is on the inside of the barrel. Has a gated structure, the ends of the cylinder being occluded by the N-termini of the alpha-subunits. Is capped at one or both ends by the proteasome regulatory ATPase, PAN.

Its subcellular location is the cytoplasm. The enzyme catalyses Cleavage of peptide bonds with very broad specificity.. With respect to regulation, the formation of the proteasomal ATPase PAN-20S proteasome complex, via the docking of the C-termini of PAN into the intersubunit pockets in the alpha-rings, triggers opening of the gate for substrate entry. Interconversion between the open-gate and close-gate conformations leads to a dynamic regulation of the 20S proteasome proteolysis activity. Component of the proteasome core, a large protease complex with broad specificity involved in protein degradation. In Natrialba magadii (strain ATCC 43099 / DSM 3394 / CCM 3739 / CIP 104546 / IAM 13178 / JCM 8861 / NBRC 102185 / NCIMB 2190 / MS3) (Natronobacterium magadii), this protein is Proteasome subunit beta.